Reading from the N-terminus, the 877-residue chain is Alanine--tRNA ligase (877 aa).

Residues histidine 567, histidine 571, cysteine 669, and histidine 673 each contribute to the Zn(2+) site.

Belongs to the class-II aminoacyl-tRNA synthetase family. Zn(2+) serves as cofactor.

Its subcellular location is the cytoplasm. The catalysed reaction is tRNA(Ala) + L-alanine + ATP = L-alanyl-tRNA(Ala) + AMP + diphosphate. Functionally, catalyzes the attachment of alanine to tRNA(Ala) in a two-step reaction: alanine is first activated by ATP to form Ala-AMP and then transferred to the acceptor end of tRNA(Ala). Also edits incorrectly charged Ser-tRNA(Ala) and Gly-tRNA(Ala) via its editing domain. The sequence is that of Alanine--tRNA ligase from Rickettsia prowazekii (strain Madrid E).